Reading from the N-terminus, the 368-residue chain is Meiotic driver wtf23 (368 aa).

Positions 1-98 are disordered; the sequence is MKNKYYPLRS…SSGTADNSST (98 aa). Residues 11–29 show a composition bias toward basic and acidic residues; it reads SMDELSAKNDNEIDLEKGP. Polar residues-rich tracts occupy residues 57-72 and 89-98; these read GANNPNLFNTDESTTP and SSGTADNSST. 7 helical membrane passes run 105–124, 139–158, 170–192, 202–221, 234–256, 266–283, and 328–350; these read FLSFISIFVLNVPAVCYLTY, YFGVWCAICLMIFISLWYFY, IFLAQCIKVTVVFLAQCVKVISI, MIIIWLLWLIICCILFGCVK, STCTISAVLLLIVSSVCIPFWTF, VFLLQSGIVLVLNGTMFL, and GIAFILGGIGNAMMGLANAFRGG.

This sequence belongs to the WTF family. Homomer. Forms protein aggregates. The two isoforms can interact with each other and with themselves. High sequence similarity is required for their interaction.

Its subcellular location is the spore membrane. The protein localises to the vacuole membrane. It localises to the ascus epiplasm. The protein resides in the cytoplasm. It is found in the endoplasmic reticulum membrane. Functionally, promotes unequal transmission of alleles from the parental zygote to progeny spores by acting as poison/antidote system where the poison and antidote proteins are produced from the same locus; the poison component is trans-acting and targets all spores within an ascus whereas the antidote component is spore-specific, leading to poisoning of all progeny that do not inherit the allele. Its function is as follows. Localizes isoform 2 to the vacuole thereby facilitating its degradation. Forms toxic aggregates that disrupt spore maturation. This is Meiotic driver wtf23 from Schizosaccharomyces pombe (strain 972 / ATCC 24843) (Fission yeast).